The primary structure comprises 516 residues: mRNA export factor ICP27 homolog (516 aa).

Zn(2+) contacts are provided by Cys-231, His-336, Cys-338, and Cys-343. The CHC2-type zinc finger occupies Cys-231–Cys-343. Residues Tyr-399–Ser-409 show a composition bias toward polar residues. The disordered stretch occupies residues Tyr-399–Ser-423.

It belongs to the HHV-1 ICP27 protein family.

The protein localises to the virion tegument. It localises to the virion. Its subcellular location is the host nucleus. The protein resides in the host cytoplasm. In terms of biological role, immediate early (EI) protein that plays many roles during productive infection including regulation of viral gene expression and nuclear export of intronless viral RNAs. The protein is mRNA export factor ICP27 homolog of Homo sapiens (Human).